Consider the following 581-residue polypeptide: Leucine aminopeptidase 3, chloroplastic (581 aa).

The transit peptide at 1–50 (MAVTLVTSCASSSRFHFRSFSSSPSSLSSCFVRFQLLSRLRVSFAITPLY) directs the protein to the chloroplast. Mn(2+) contacts are provided by lysine 350 and aspartate 355. Lysine 362 is an active-site residue. Mn(2+) is bound by residues aspartate 375, aspartate 435, and glutamate 437. Residue arginine 439 is part of the active site.

It belongs to the peptidase M17 family. In terms of assembly, homohexamer (dimer of homotrimers). Mn(2+) serves as cofactor.

It is found in the plastid. The protein localises to the chloroplast. The catalysed reaction is Release of an N-terminal amino acid, Xaa-|-Yaa-, in which Xaa is preferably Leu, but may be other amino acids including Pro although not Arg or Lys, and Yaa may be Pro. Amino acid amides and methyl esters are also readily hydrolyzed, but rates on arylamides are exceedingly low.. The enzyme catalyses Release of N-terminal proline from a peptide.. Presumably involved in the processing and regular turnover of intracellular proteins. Catalyzes the removal of unsubstituted N-terminal amino acids from various peptides. Possesses Cys-Gly dipeptidase activity. This is Leucine aminopeptidase 3, chloroplastic from Arabidopsis thaliana (Mouse-ear cress).